A 522-amino-acid polypeptide reads, in one-letter code: 2-isopropylmalate synthase (522 aa).

A Pyruvate carboxyltransferase domain is found at 5-267 (VIIFDTTLRD…ETGINAKEIH (263 aa)). Asp-14, His-202, His-204, and Asn-238 together coordinate Mn(2+). A regulatory domain region spans residues 392–522 (QLQQLVVQSD…MQKNRELGGV (131 aa)).

This sequence belongs to the alpha-IPM synthase/homocitrate synthase family. LeuA type 1 subfamily. In terms of assembly, homodimer. Mn(2+) serves as cofactor.

The protein resides in the cytoplasm. It carries out the reaction 3-methyl-2-oxobutanoate + acetyl-CoA + H2O = (2S)-2-isopropylmalate + CoA + H(+). It participates in amino-acid biosynthesis; L-leucine biosynthesis; L-leucine from 3-methyl-2-oxobutanoate: step 1/4. Functionally, catalyzes the condensation of the acetyl group of acetyl-CoA with 3-methyl-2-oxobutanoate (2-ketoisovalerate) to form 3-carboxy-3-hydroxy-4-methylpentanoate (2-isopropylmalate). This chain is 2-isopropylmalate synthase, found in Shewanella putrefaciens (strain CN-32 / ATCC BAA-453).